The chain runs to 314 residues: tRNA dimethylallyltransferase (314 aa).

Gly12 to Thr19 provides a ligand contact to ATP. Thr14 to Thr19 contributes to the substrate binding site. Interaction with substrate tRNA stretches follow at residues Asp37–Leu40 and Gln162–Arg166.

Belongs to the IPP transferase family. Monomer. The cofactor is Mg(2+).

The enzyme catalyses adenosine(37) in tRNA + dimethylallyl diphosphate = N(6)-dimethylallyladenosine(37) in tRNA + diphosphate. Catalyzes the transfer of a dimethylallyl group onto the adenine at position 37 in tRNAs that read codons beginning with uridine, leading to the formation of N6-(dimethylallyl)adenosine (i(6)A). The polypeptide is tRNA dimethylallyltransferase (Acinetobacter baumannii (strain AB0057)).